A 535-amino-acid polypeptide reads, in one-letter code: 3-hydroxyindolin-2-one monooxygenase (535 aa).

A run of 2 helical transmembrane segments spans residues Val-14–Ile-34 and Ile-469–Tyr-489. A heme-binding site is contributed by Cys-470.

Belongs to the cytochrome P450 family. The cofactor is heme.

The protein localises to the membrane. It catalyses the reaction 3-hydroxyindolin-2-one + reduced [NADPH--hemoprotein reductase] + O2 = 2-hydroxy-2H-1,4-benzoxazin-3(4H)-one + oxidized [NADPH--hemoprotein reductase] + H2O + H(+). It participates in secondary metabolite biosynthesis; 2,4-dihydroxy-1,4-benzoxazin-3-one biosynthesis; 2,4-dihydroxy-1,4-benzoxazin-3-one from indoleglycerol phosphate: step 4/5. Catalyzes the conversion of 3-hydroxyindolin-2-one to 2-hydroxy-1,4-benzoxazin-3-one (HBOA). The protein is 3-hydroxyindolin-2-one monooxygenase (CYP71C1) of Zea mays (Maize).